The following is a 388-amino-acid chain: Chorismate synthase (388 aa).

NADP(+)-binding residues include Arg39 and Arg45. Residues 130 to 132 (RSS), 251 to 252 (NA), Gly296, 311 to 315 (KPIPT), and Arg337 each bind FMN.

Belongs to the chorismate synthase family. As to quaternary structure, homotetramer. Requires FMNH2 as cofactor.

The enzyme catalyses 5-O-(1-carboxyvinyl)-3-phosphoshikimate = chorismate + phosphate. Its pathway is metabolic intermediate biosynthesis; chorismate biosynthesis; chorismate from D-erythrose 4-phosphate and phosphoenolpyruvate: step 7/7. Functionally, catalyzes the anti-1,4-elimination of the C-3 phosphate and the C-6 proR hydrogen from 5-enolpyruvylshikimate-3-phosphate (EPSP) to yield chorismate, which is the branch point compound that serves as the starting substrate for the three terminal pathways of aromatic amino acid biosynthesis. This reaction introduces a second double bond into the aromatic ring system. The sequence is that of Chorismate synthase from Streptococcus mutans serotype c (strain ATCC 700610 / UA159).